The following is a 416-amino-acid chain: Transcription factor caaR (416 aa).

The zn(2)-C6 fungal-type DNA-binding region spans 13 to 44 (CDRCYAQKLRCPRPSTNDDASCIRCLRQKVQC). Disordered stretches follow at residues 68 to 90 (ATAG…SDTA) and 130 to 150 (QPPP…GLDN). The span at 130–141 (QPPPLDTTPPPR) shows a compositional bias: pro residues. 2 helical membrane passes run 249-269 (VIYH…ATLL) and 302-322 (SAPS…TYFL).

The protein localises to the membrane. Its subcellular location is the nucleus. Functionally, transcription factor that positively regulates the expression of the gene cluster that mediates the biosynthesis of the acyltetronic acid derivatives carlosic acid, agglomerin F and carlosic acid methyl ether. The protein is Transcription factor caaR of Aspergillus niger (strain ATCC MYA-4892 / CBS 513.88 / FGSC A1513).